Here is a 408-residue protein sequence, read N- to C-terminus: MANINENYLKLKAGYLFPEISKRVKIYSEKNPSAKIIRLGIGDVTLPIVPSVVDAMVEASKEMGTVGGFHGYGPEQGYSFLLKSIADHDYGSLGIKIDESEIFVSDGSKCDCGNIQEIFSTDSKIAVADPVYPVYVDTNVMAGRTGEIGPDGRYSNLIYMPATKENGFQPEIPKEKADIVYLCYPNNPTGTVTTKESLKAWVEYAKKNNSIILYDSAYEAFISEPGVPRSIYEVEGAKEVAIEFRSFSKTAGFTGLRCAYIVIPKELKGKTRSGEEVSLNSLWNRRHTTKFNGVSYVTQKGAEACYSPQGKKEIQTSIAYYMANASKIRDGLKKAGYEVFGGVNAPYIWLKTSDNLSSWDFFDKLLNKAQVVGTPGSGFGPAGEGYFRLSAFGKKEDVEEAIARITSL.

Substrate is bound by residues Y15 and G42. Residues Y72, 108–109 (SK), Y132, N187, Y218, and 246–248 (SFS) each bind pyridoxal 5'-phosphate. Substrate-binding residues include K109, Y132, and N187. K249 bears the N6-(pyridoxal phosphate)lysine mark. Residues R257 and N292 each coordinate pyridoxal 5'-phosphate. Substrate contacts are provided by N292 and R388.

This sequence belongs to the class-I pyridoxal-phosphate-dependent aminotransferase family. LL-diaminopimelate aminotransferase subfamily. In terms of assembly, homodimer. Requires pyridoxal 5'-phosphate as cofactor.

It carries out the reaction (2S,6S)-2,6-diaminopimelate + 2-oxoglutarate = (S)-2,3,4,5-tetrahydrodipicolinate + L-glutamate + H2O + H(+). Its pathway is amino-acid biosynthesis; L-lysine biosynthesis via DAP pathway; LL-2,6-diaminopimelate from (S)-tetrahydrodipicolinate (aminotransferase route): step 1/1. In terms of biological role, involved in the synthesis of meso-diaminopimelate (m-DAP or DL-DAP), required for both lysine and peptidoglycan biosynthesis. Catalyzes the direct conversion of tetrahydrodipicolinate to LL-diaminopimelate. This is LL-diaminopimelate aminotransferase from Leptospira interrogans serogroup Icterohaemorrhagiae serovar Lai (strain 56601).